A 130-amino-acid polypeptide reads, in one-letter code: MSMQDPISDMLTRVRNGQSANKVAVKMPSSKLKVAIAALLKAEGYIADFAVEGDIKPELEITLKYFQAKQVIEQIQRVSRPGLRVYKKNDALPSVMGGLGIAVISTSKGLMSDRAARKAGLGGEIICYVA.

Belongs to the universal ribosomal protein uS8 family. In terms of assembly, part of the 30S ribosomal subunit. Contacts proteins S5 and S12.

Its function is as follows. One of the primary rRNA binding proteins, it binds directly to 16S rRNA central domain where it helps coordinate assembly of the platform of the 30S subunit. This chain is Small ribosomal subunit protein uS8, found in Aliivibrio salmonicida (strain LFI1238) (Vibrio salmonicida (strain LFI1238)).